The sequence spans 236 residues: 2-C-methyl-D-erythritol 4-phosphate cytidylyltransferase (236 aa).

This sequence belongs to the IspD/TarI cytidylyltransferase family. IspD subfamily.

The enzyme catalyses 2-C-methyl-D-erythritol 4-phosphate + CTP + H(+) = 4-CDP-2-C-methyl-D-erythritol + diphosphate. It functions in the pathway isoprenoid biosynthesis; isopentenyl diphosphate biosynthesis via DXP pathway; isopentenyl diphosphate from 1-deoxy-D-xylulose 5-phosphate: step 2/6. In terms of biological role, catalyzes the formation of 4-diphosphocytidyl-2-C-methyl-D-erythritol from CTP and 2-C-methyl-D-erythritol 4-phosphate (MEP). This chain is 2-C-methyl-D-erythritol 4-phosphate cytidylyltransferase, found in Pseudomonas savastanoi pv. phaseolicola (strain 1448A / Race 6) (Pseudomonas syringae pv. phaseolicola (strain 1448A / Race 6)).